A 195-amino-acid polypeptide reads, in one-letter code: Phosphoribosylglycinamide formyltransferase (195 aa).

12–14 (GSN) lines the N(1)-(5-phospho-beta-D-ribosyl)glycinamide pocket. (6R)-10-formyltetrahydrofolate is bound by residues Lys-65, 90–93 (MRLI), and Asn-107. The active-site Proton donor is His-109.

Belongs to the GART family.

It catalyses the reaction N(1)-(5-phospho-beta-D-ribosyl)glycinamide + (6R)-10-formyltetrahydrofolate = N(2)-formyl-N(1)-(5-phospho-beta-D-ribosyl)glycinamide + (6S)-5,6,7,8-tetrahydrofolate + H(+). The protein operates within purine metabolism; IMP biosynthesis via de novo pathway; N(2)-formyl-N(1)-(5-phospho-D-ribosyl)glycinamide from N(1)-(5-phospho-D-ribosyl)glycinamide (10-formyl THF route): step 1/1. Its function is as follows. Catalyzes the transfer of a formyl group from 10-formyltetrahydrofolate to 5-phospho-ribosyl-glycinamide (GAR), producing 5-phospho-ribosyl-N-formylglycinamide (FGAR) and tetrahydrofolate. This Bacillus subtilis (strain 168) protein is Phosphoribosylglycinamide formyltransferase.